The primary structure comprises 149 residues: Large ribosomal subunit protein bL9 (149 aa).

The protein belongs to the bacterial ribosomal protein bL9 family.

Functionally, binds to the 23S rRNA. This Aliivibrio salmonicida (strain LFI1238) (Vibrio salmonicida (strain LFI1238)) protein is Large ribosomal subunit protein bL9.